Here is a 151-residue protein sequence, read N- to C-terminus: Prefoldin subunit alpha (151 aa).

This sequence belongs to the prefoldin subunit alpha family. As to quaternary structure, heterohexamer of two alpha and four beta subunits.

The protein localises to the cytoplasm. Functionally, molecular chaperone capable of stabilizing a range of proteins. Seems to fulfill an ATP-independent, HSP70-like function in archaeal de novo protein folding. The sequence is that of Prefoldin subunit alpha from Sulfurisphaera tokodaii (strain DSM 16993 / JCM 10545 / NBRC 100140 / 7) (Sulfolobus tokodaii).